Consider the following 532-residue polypeptide: Probable inorganic phosphate transporter 1-9 (532 aa).

The Cytoplasmic segment spans residues 1–22 (MPELSLLSALDAARIQWYHFKA). A helical membrane pass occupies residues 23-43 (IIVAGMGLFTDAYDLFCIAPI). Residues 44–62 (MKMISQIYYHKDSIGTALL) are Extracellular-facing. A helical transmembrane segment spans residues 63-83 (STSYAIALLGTALGQLIFGYL). The Cytoplasmic segment spans residues 84–91 (GDRVGRRK). The helical transmembrane segment at 92–112 (VYGLSLLIMVFSSFGCGFSVC) threads the bilayer. At 113–124 (TTRRSCVMVSLG) the chain is on the extracellular side. Residues 125–145 (FFRFVLGLGIGGDYPLSATIM) form a helical membrane-spanning segment. Residues 146–154 (SEFANKRTR) lie on the Cytoplasmic side of the membrane. Residues 155 to 175 (GAFIAAVFSMQGLGILMSSAV) traverse the membrane as a helical segment. The Extracellular segment spans residues 176-207 (TMVVCLAFKNAGEGSSEKTNVAGLETLAPPES). Residues 208–228 (DIAWRLILMIGALPAALTFYW) traverse the membrane as a helical segment. Residues 229 to 292 (RMLMPETARY…KLFSRRFLSL (64 aa)) are Cytoplasmic-facing. A helical membrane pass occupies residues 293-313 (HGRDLFAASANWFLVDVVFYT). The Extracellular portion of the chain corresponds to 314-343 (SNLLLSQIFNFSNKPLNSTNVYDSAFEVAK). The helical transmembrane segment at 344 to 364 (LAAIVAACSTIPGYWFTVYFI) threads the bilayer. At 365–371 (DKIGRVK) the chain is on the cytoplasmic side. A helical membrane pass occupies residues 372–392 (IQMMGFFLMAVVYLVAGIPYS). The Extracellular portion of the chain corresponds to 393–406 (WYWSKHEKTNKGFM). A helical membrane pass occupies residues 407-427 (VLYGLIFFFSNFGPNTTTFII). Residues 428–441 (PAELFPARFRSTCH) lie on the Cytoplasmic side of the membrane. The chain crosses the membrane as a helical span at residues 442 to 462 (GISGAAGKFGAIVGTVGFLWA). The Extracellular segment spans residues 463 to 478 (TRHHEEDGFPDVKRVR). Residues 479 to 499 (IAFLILGGVCIAGMIVTYLFT) traverse the membrane as a helical segment. Topologically, residues 500–532 (RETMGRSLEENEDEIVSTSAGSSPANELLRRQY) are cytoplasmic. A disordered region spans residues 509–532 (ENEDEIVSTSAGSSPANELLRRQY). Over residues 515 to 524 (VSTSAGSSPA) the composition is skewed to polar residues.

This sequence belongs to the major facilitator superfamily. Phosphate:H(+) symporter (TC 2.A.1.9) family.

Its subcellular location is the membrane. In terms of biological role, high-affinity transporter for external inorganic phosphate. The sequence is that of Probable inorganic phosphate transporter 1-9 (PHT1-9) from Arabidopsis thaliana (Mouse-ear cress).